The following is a 444-amino-acid chain: DNA primase DnaG (444 aa).

The region spanning 173–250 is the Toprim domain; the sequence is DAILIVEGRS…YVTRAPRGLE (78 aa). Mg(2+)-binding residues include glutamate 179, aspartate 221, and aspartate 223. The interval 302–354 is disordered; that stretch reads VTSSVNKTDKYSQKNESKQFKQQKNENKQVKDNSKEKTQKSTEKHNETEETHL. The segment covering 308–354 has biased composition (basic and acidic residues); it reads KTDKYSQKNESKQFKQQKNENKQVKDNSKEKTQKSTEKHNETEETHL.

Belongs to the archaeal DnaG primase family. As to quaternary structure, forms a ternary complex with MCM helicase and DNA. Component of the archaeal exosome complex. The cofactor is Mg(2+).

It catalyses the reaction ssDNA + n NTP = ssDNA/pppN(pN)n-1 hybrid + (n-1) diphosphate.. Its function is as follows. RNA polymerase that catalyzes the synthesis of short RNA molecules used as primers for DNA polymerase during DNA replication. Also part of the exosome, which is a complex involved in RNA degradation. Acts as a poly(A)-binding protein that enhances the interaction between heteromeric, adenine-rich transcripts and the exosome. This Methanosphaera stadtmanae (strain ATCC 43021 / DSM 3091 / JCM 11832 / MCB-3) protein is DNA primase DnaG.